Consider the following 712-residue polypeptide: Polyribonucleotide nucleotidyltransferase (712 aa).

Mg(2+) contacts are provided by aspartate 484 and aspartate 490. The KH domain occupies proline 550 to isoleucine 609. The 68-residue stretch at glycine 619–lysine 686 folds into the S1 motif domain.

The protein belongs to the polyribonucleotide nucleotidyltransferase family. It depends on Mg(2+) as a cofactor.

The protein localises to the cytoplasm. The catalysed reaction is RNA(n+1) + phosphate = RNA(n) + a ribonucleoside 5'-diphosphate. Its function is as follows. Involved in mRNA degradation. Catalyzes the phosphorolysis of single-stranded polyribonucleotides processively in the 3'- to 5'-direction. The polypeptide is Polyribonucleotide nucleotidyltransferase (Brachyspira hyodysenteriae (strain ATCC 49526 / WA1)).